The sequence spans 500 residues: Archaeal-type glutamate synthase [NADPH] (500 aa).

2 consecutive 4Fe-4S ferredoxin-type domains span residues 7–38 (SKFIVDRIEDRCIKCKVCITQCSFDTHYYDED) and 40–69 (DQIKVRNQNCVGCHRCVTFCPTNALVVRNN). [4Fe-4S] cluster-binding residues include cysteine 18, cysteine 21, cysteine 24, cysteine 28, cysteine 49, cysteine 52, cysteine 55, and cysteine 59.

Belongs to the glutamate synthase family. FMN serves as cofactor.

The enzyme catalyses 2 L-glutamate + NADP(+) = L-glutamine + 2-oxoglutarate + NADPH + H(+). This chain is Archaeal-type glutamate synthase [NADPH], found in Dehalococcoides mccartyi (strain ATCC BAA-2266 / KCTC 15142 / 195) (Dehalococcoides ethenogenes (strain 195)).